Consider the following 119-residue polypeptide: Phospholipase A2 A2-actitoxin-Cgg2a (119 aa).

Intrachain disulfides connect C25–C119, C27–C43, C42–C101, C49–C94, C61–C87, and C78–C92. G28 and G30 together coordinate Ca(2+). H46 is an active-site residue. D47 lines the Ca(2+) pocket. The active site involves D95.

The protein belongs to the phospholipase A2 family. As to quaternary structure, homodimer. Ca(2+) serves as cofactor.

It is found in the secreted. The protein localises to the nematocyst. The catalysed reaction is a 1,2-diacyl-sn-glycero-3-phosphocholine + H2O = a 1-acyl-sn-glycero-3-phosphocholine + a fatty acid + H(+). Its function is as follows. Sea anemone phospholipase A2 (PLA2). When incubated with plasma, this protein shows a moderate anticoagulant activity (0.15 ug of enzyme/200 uL of plasma), inhibiting clotting induced by thrombin. This enzyme also induces myotoxicity, and edema. PLA2 catalyzes the calcium-dependent hydrolysis of the 2-acyl groups in 3-sn-phosphoglycerides. This is Phospholipase A2 A2-actitoxin-Cgg2a from Condylactis gigantea (Giant Caribbean anemone).